Consider the following 360-residue polypeptide: Peptide chain release factor 1 (360 aa).

Gln-237 is subject to N5-methylglutamine.

Belongs to the prokaryotic/mitochondrial release factor family. Post-translationally, methylated by PrmC. Methylation increases the termination efficiency of RF1.

It localises to the cytoplasm. In terms of biological role, peptide chain release factor 1 directs the termination of translation in response to the peptide chain termination codons UAG and UAA. In Pseudomonas aeruginosa (strain ATCC 15692 / DSM 22644 / CIP 104116 / JCM 14847 / LMG 12228 / 1C / PRS 101 / PAO1), this protein is Peptide chain release factor 1 (prfA).